The primary structure comprises 510 residues: NAD(P)H-quinone oxidoreductase subunit 2, chloroplastic (510 aa).

The next 13 membrane-spanning stretches (helical) occupy residues 26–46, 57–77, 99–119, 124–144, 149–169, 184–204, 227–247, 295–315, 323–343, 354–374, 395–415, 418–438, and 484–504; these read LFDG…ILLL, IPWL…ALLF, IFQV…VEYI, MAIT…MFLC, LITI…LSGY, LLMG…LYGL, PGIS…LSPA, WHLL…LIAI, MLAY…IVGD, YMLF…LFGL, ALSL…AGFF, LYLF…IALV, and MIVC…IIAI.

The protein belongs to the complex I subunit 2 family. In terms of assembly, NDH is composed of at least 16 different subunits, 5 of which are encoded in the nucleus.

It is found in the plastid. The protein resides in the chloroplast thylakoid membrane. It catalyses the reaction a plastoquinone + NADH + (n+1) H(+)(in) = a plastoquinol + NAD(+) + n H(+)(out). The enzyme catalyses a plastoquinone + NADPH + (n+1) H(+)(in) = a plastoquinol + NADP(+) + n H(+)(out). In terms of biological role, NDH shuttles electrons from NAD(P)H:plastoquinone, via FMN and iron-sulfur (Fe-S) centers, to quinones in the photosynthetic chain and possibly in a chloroplast respiratory chain. The immediate electron acceptor for the enzyme in this species is believed to be plastoquinone. Couples the redox reaction to proton translocation, and thus conserves the redox energy in a proton gradient. The chain is NAD(P)H-quinone oxidoreductase subunit 2, chloroplastic from Trachelium caeruleum (Blue throatwort).